Here is a 322-residue protein sequence, read N- to C-terminus: MTESLNRDLPVLLATLNKLSSDADRILLENREDIRKIAYNLSIVMEKVKDDLPVLVENLKELSVNLNTVVKNNKVNINKTLVSLRKTTENLSRASYKLDKILADLESGKGTLGKLLKDEELYENVNQGVKALGKAGKVVEKTQLYIGLRGELYREGDSKGILSVRLVPDRDKYYLLEVVGDSRGRVYREEYLDGREVVKKEFKPEFTLQYARNFSLFGRTLTLRGGLKENTGGVGADYYIYRDKYLFADLWDFGRKDRPQDKDLKPNLQIGIHWYINRNLYVRFGGDDLLNSKLRGFFGGVGLEFVDEDLKYLLGGIGVPIR.

This is an uncharacterized protein from Aquifex aeolicus (strain VF5).